Here is a 559-residue protein sequence, read N- to C-terminus: DNA ligase (559 aa).

Glutamate 231 lines the ATP pocket. Lysine 233 (N6-AMP-lysine intermediate) is an active-site residue. ATP contacts are provided by arginine 238 and glutamate 285. The Mg(2+) site is built by glutamate 285 and glutamate 379. ATP-binding residues include lysine 384 and lysine 399.

The protein belongs to the ATP-dependent DNA ligase family. Interacts with host TOP2A and TOP2B. The cofactor is Mg(2+).

Its subcellular location is the host cytoplasm. It carries out the reaction ATP + (deoxyribonucleotide)n-3'-hydroxyl + 5'-phospho-(deoxyribonucleotide)m = (deoxyribonucleotide)n+m + AMP + diphosphate.. Its function is as follows. DNA ligase that seals nicks in double-stranded DNA during DNA replication, DNA recombination and DNA repair. Recruits cellular topoisomerase II to sites of viral replication and assembly. This is DNA ligase (OPG180) from Monkeypox virus.